The sequence spans 645 residues: UvrABC system protein C (645 aa).

Residues 12–91 enclose the GIY-YIG domain; it reads TGPGVYLYKN…IKQRKPRFNV (80 aa). One can recognise a UVR domain in the interval 202 to 237; the sequence is ADLERSLEVRMQEAAAAEQFELAAKYRDLLVTLHQL.

The protein belongs to the UvrC family. Interacts with UvrB in an incision complex.

It is found in the cytoplasm. The UvrABC repair system catalyzes the recognition and processing of DNA lesions. UvrC both incises the 5' and 3' sides of the lesion. The N-terminal half is responsible for the 3' incision and the C-terminal half is responsible for the 5' incision. The sequence is that of UvrABC system protein C from Acidobacterium capsulatum (strain ATCC 51196 / DSM 11244 / BCRC 80197 / JCM 7670 / NBRC 15755 / NCIMB 13165 / 161).